A 140-amino-acid polypeptide reads, in one-letter code: Ribonuclease P protein component (140 aa).

The interval 33-54 is disordered; that stretch reads RALKPSSAKKSSLDTAAKTQPA.

This sequence belongs to the RnpA family. Consists of a catalytic RNA component (M1 or rnpB) and a protein subunit.

It catalyses the reaction Endonucleolytic cleavage of RNA, removing 5'-extranucleotides from tRNA precursor.. Its function is as follows. RNaseP catalyzes the removal of the 5'-leader sequence from pre-tRNA to produce the mature 5'-terminus. It can also cleave other RNA substrates such as 4.5S RNA. The protein component plays an auxiliary but essential role in vivo by binding to the 5'-leader sequence and broadening the substrate specificity of the ribozyme. The sequence is that of Ribonuclease P protein component from Trichormus variabilis (strain ATCC 29413 / PCC 7937) (Anabaena variabilis).